We begin with the raw amino-acid sequence, 304 residues long: Aspartate carbamoyltransferase catalytic subunit (304 aa).

Residues Arg55 and Thr56 each contribute to the carbamoyl phosphate site. Lys83 contributes to the L-aspartate binding site. Carbamoyl phosphate is bound by residues Arg105, His133, and Gln136. Arg166 and Arg220 together coordinate L-aspartate. Carbamoyl phosphate-binding residues include Gly261 and Pro262.

This sequence belongs to the aspartate/ornithine carbamoyltransferase superfamily. ATCase family. Heterododecamer (2C3:3R2) of six catalytic PyrB chains organized as two trimers (C3), and six regulatory PyrI chains organized as three dimers (R2).

The catalysed reaction is carbamoyl phosphate + L-aspartate = N-carbamoyl-L-aspartate + phosphate + H(+). The protein operates within pyrimidine metabolism; UMP biosynthesis via de novo pathway; (S)-dihydroorotate from bicarbonate: step 2/3. Catalyzes the condensation of carbamoyl phosphate and aspartate to form carbamoyl aspartate and inorganic phosphate, the committed step in the de novo pyrimidine nucleotide biosynthesis pathway. This chain is Aspartate carbamoyltransferase catalytic subunit, found in Caldanaerobacter subterraneus subsp. tengcongensis (strain DSM 15242 / JCM 11007 / NBRC 100824 / MB4) (Thermoanaerobacter tengcongensis).